The sequence spans 449 residues: Asparagine--tRNA ligase (449 aa).

Belongs to the class-II aminoacyl-tRNA synthetase family. Homodimer.

The protein localises to the cytoplasm. It carries out the reaction tRNA(Asn) + L-asparagine + ATP = L-asparaginyl-tRNA(Asn) + AMP + diphosphate + H(+). The polypeptide is Asparagine--tRNA ligase (Mesomycoplasma hyopneumoniae (strain J / ATCC 25934 / NCTC 10110) (Mycoplasma hyopneumoniae)).